A 403-amino-acid chain; its full sequence is Betaine--homocysteine S-methyltransferase 1 (403 aa).

Residues 8–311 (KGLLERLDAG…YHTRAIAEEL (304 aa)) form the Hcy-binding domain. Zn(2+) contacts are provided by Cys214, Cys296, and Cys297.

In terms of assembly, homotetramer. It depends on Zn(2+) as a cofactor.

The protein localises to the cytoplasm. It catalyses the reaction L-homocysteine + glycine betaine = N,N-dimethylglycine + L-methionine. It participates in amine and polyamine degradation; betaine degradation; sarcosine from betaine: step 1/2. The protein operates within amino-acid biosynthesis; L-methionine biosynthesis via de novo pathway; L-methionine from L-homocysteine (BhmT route): step 1/1. Functionally, involved in the regulation of homocysteine metabolism. Converts betaine and homocysteine to dimethylglycine and methionine, respectively. This reaction is also required for the irreversible oxidation of choline. The chain is Betaine--homocysteine S-methyltransferase 1 (bhmt) from Xenopus tropicalis (Western clawed frog).